The sequence spans 86 residues: Protein GOLVEN 1 (86 aa).

Residues 1–29 (MSCSLRSGLVIVFCFILLLLSSNVGCASA) form the signal peptide. Residues 30–70 (ARRLRSHKHHHHKVASLDVFNGGERRRALGGVETGEEVVVM) constitute a propeptide that is removed on maturation. Y72 carries the post-translational modification Sulfotyrosine. The residue at position 80 (P80) is a Hydroxyproline. A propeptide spanning residues 84 to 86 (EKS) is cleaved from the precursor.

Belongs to the RGF family. Binds to LRR receptor-like serine/threonine-protein kinases to trigger their dimerization with SERK proteins and subsequent signaling. In terms of tissue distribution, expressed in stems, hypocotyls, cotyledons, leaves, flowers, shoot apex, siliques, stamens and petals.

The protein localises to the endoplasmic reticulum. It localises to the secreted. Signaling peptide (root growth factor) that regulates the pattern of root growth and lateral root development by modulating the length and the number of cortical cells in the root apical meristem (RAM), and the anticlinal asymmetric cell divisions in lateral root initiation cells. Also involved in the regulation of hypocotyl bending and root gravitropism in a PIN2-traffic dependent manner, thus influencing the formation of auxin gradients. Maintains the postembryonic root stem cell niche. The sequence is that of Protein GOLVEN 1 from Arabidopsis thaliana (Mouse-ear cress).